Here is a 554-residue protein sequence, read N- to C-terminus: 2-succinyl-5-enolpyruvyl-6-hydroxy-3-cyclohexene-1-carboxylate synthase (554 aa).

It belongs to the TPP enzyme family. MenD subfamily. Homodimer. It depends on Mg(2+) as a cofactor. Mn(2+) serves as cofactor. Thiamine diphosphate is required as a cofactor.

It catalyses the reaction isochorismate + 2-oxoglutarate + H(+) = 5-enolpyruvoyl-6-hydroxy-2-succinyl-cyclohex-3-ene-1-carboxylate + CO2. Its pathway is quinol/quinone metabolism; 1,4-dihydroxy-2-naphthoate biosynthesis; 1,4-dihydroxy-2-naphthoate from chorismate: step 2/7. The protein operates within quinol/quinone metabolism; menaquinone biosynthesis. In terms of biological role, catalyzes the thiamine diphosphate-dependent decarboxylation of 2-oxoglutarate and the subsequent addition of the resulting succinic semialdehyde-thiamine pyrophosphate anion to isochorismate to yield 2-succinyl-5-enolpyruvyl-6-hydroxy-3-cyclohexene-1-carboxylate (SEPHCHC). The sequence is that of 2-succinyl-5-enolpyruvyl-6-hydroxy-3-cyclohexene-1-carboxylate synthase from Renibacterium salmoninarum (strain ATCC 33209 / DSM 20767 / JCM 11484 / NBRC 15589 / NCIMB 2235).